The sequence spans 154 residues: Myoglobin (154 aa).

Residues 2–148 (GLSDGEWQLV…FRNDIAAKYK (147 aa)) form the Globin domain. S4 bears the Phosphoserine mark. H65 contributes to the nitrite binding site. H65 contributes to the O2 binding site. T68 bears the Phosphothreonine mark. Residue H94 participates in heme b binding.

This sequence belongs to the globin family. As to quaternary structure, monomeric.

It localises to the cytoplasm. It is found in the sarcoplasm. The enzyme catalyses Fe(III)-heme b-[protein] + nitric oxide + H2O = Fe(II)-heme b-[protein] + nitrite + 2 H(+). It catalyses the reaction H2O2 + AH2 = A + 2 H2O. Monomeric heme protein which primary function is to store oxygen and facilitate its diffusion within muscle tissues. Reversibly binds oxygen through a pentacoordinated heme iron and enables its timely and efficient release as needed during periods of heightened demand. Depending on the oxidative conditions of tissues and cells, and in addition to its ability to bind oxygen, it also has a nitrite reductase activity whereby it regulates the production of bioactive nitric oxide. Under stress conditions, like hypoxia and anoxia, it also protects cells against reactive oxygen species thanks to its pseudoperoxidase activity. This is Myoglobin (MB) from Ctenodactylus gundi (Northern gundi).